Reading from the N-terminus, the 167-residue chain is Peptidyl-prolyl cis-trans isomerase-like 3 (167 aa).

Positions 1–160 (MSVTLHTTLG…EEVRIERVTV (160 aa)) constitute a PPIase cyclophilin-type domain.

Belongs to the cyclophilin-type PPIase family. PPIL3 subfamily.

It catalyses the reaction [protein]-peptidylproline (omega=180) = [protein]-peptidylproline (omega=0). PPIases accelerate the folding of proteins. It catalyzes the cis-trans isomerization of proline imidic peptide bonds in oligopeptides. In Neurospora crassa (strain ATCC 24698 / 74-OR23-1A / CBS 708.71 / DSM 1257 / FGSC 987), this protein is Peptidyl-prolyl cis-trans isomerase-like 3 (cyp-10).